A 233-amino-acid chain; its full sequence is MQQLNKISYLNQIQSQQFDVELMSEEVGFTLDQLMELAGQSIANTVVQLNKEGKSYNKILVLCGPGNNGGDGIVSARHLKQFGLQPEIALFREVKNPFFNRLLNQCKYNLIPIHYELQDLEKYDLLIDAILGFSFKPPLREPYDKPIQQLKTTKTPILSVDIPSGWDVEQGNAQDFFTPQYLISLTLPKLGVKSFKGRHFIGGRFIPLKLQEKYNFIVPEYQGSDTILELSNL.

Positions 15–218 (SQQFDVELMS…KLQEKYNFIV (204 aa)) constitute a YjeF N-terminal domain. Residue 67–71 (NNGGD) participates in (6S)-NADPHX binding. K(+) is bound by residues Asn-68 and Asp-128. (6S)-NADPHX contacts are provided by residues 132–138 (GFSFKPP), Tyr-143, and Asp-161. Ser-164 is a K(+) binding site.

This sequence belongs to the NnrE/AIBP family. It depends on K(+) as a cofactor.

The catalysed reaction is (6R)-NADHX = (6S)-NADHX. It carries out the reaction (6R)-NADPHX = (6S)-NADPHX. Its function is as follows. Catalyzes the epimerization of the S- and R-forms of NAD(P)HX, a damaged form of NAD(P)H that is a result of enzymatic or heat-dependent hydration. This is a prerequisite for the S-specific NAD(P)H-hydrate dehydratase to allow the repair of both epimers of NAD(P)HX. The protein is NAD(P)H-hydrate epimerase of Paramecium tetraurelia.